Here is a 234-residue protein sequence, read N- to C-terminus: Hydrolase in agr operon (234 aa).

The region spanning 1 to 212 is the CN hydrolase domain; sequence ILYNKDTDVV…EKELTVTIDI (212 aa). The active-site Proton acceptor is E14. K83 (proton donor) is an active-site residue. The active-site Nucleophile is the C119.

Belongs to the carbon-nitrogen hydrolase superfamily. NIT1/NIT2 family.

The chain is Hydrolase in agr operon from Staphylococcus lugdunensis.